The chain runs to 163 residues: Nucleotide-binding protein YajQ (163 aa).

The protein belongs to the YajQ family.

Its function is as follows. Nucleotide-binding protein. This is Nucleotide-binding protein YajQ from Escherichia coli (strain K12 / DH10B).